We begin with the raw amino-acid sequence, 573 residues long: Protein DSE1 (573 aa).

WD repeat units lie at residues 144–185 (DFPP…GCAK), 315–351 (RKNT…GKPV), 356–395 (AKKG…NMKY), and 397–448 (ELVH…NGKG). Residues 500-509 (SDSSMLSLSN) show a composition bias toward low complexity. A disordered region spans residues 500–519 (SDSSMLSLSNESDHSMTETS). Lys553 participates in a covalent cross-link: Glycyl lysine isopeptide (Lys-Gly) (interchain with G-Cter in ubiquitin).

Belongs to the WD repeat DSE1 family.

It localises to the bud neck. In terms of biological role, involved in cell wall metabolism and required for the separation of the mother and daughter cells. This chain is Protein DSE1 (DSE1), found in Saccharomyces cerevisiae (strain ATCC 204508 / S288c) (Baker's yeast).